Reading from the N-terminus, the 394-residue chain is MSQLETRTEPMVVNFGPHHPSMHGVLRLVVTLDGEDVVDCEPVIGYLHRGMEKIAENRTNVMFVPYVSRMDYAAGMFYEAIVVNAPERLAKISVPKRASYIRVLMLELNRIANHLLWLGPFLADVGAQTPFFYIFREREMIYDLWEAATGQRLINNNYFRIGGVACDLPSGWLEKCTDFCKWFGPKIDEYEKLITNNPIFRRRIEGLGAISREEAINWSLSGPMLRASGVSWDLRKVDHYECYDDFDWSISTATEGDCFARYRVRIEEMRQSLKILLQACEMIPGGPTENLEASRMLEGKGSKFAGFDYQYVAKKVAPTFKIPDGELYTRLESGKGEIGVFIQGNNDVTPWRFKIRAADLNNLQILPHILKGAKVADIMAILGSIDVIMGSVDR.

It belongs to the complex I 49 kDa subunit family. In terms of assembly, NDH-1 can be composed of about 15 different subunits; different subcomplexes with different compositions have been identified which probably have different functions.

It is found in the cellular thylakoid membrane. It catalyses the reaction a plastoquinone + NADH + (n+1) H(+)(in) = a plastoquinol + NAD(+) + n H(+)(out). It carries out the reaction a plastoquinone + NADPH + (n+1) H(+)(in) = a plastoquinol + NADP(+) + n H(+)(out). NDH-1 shuttles electrons from an unknown electron donor, via FMN and iron-sulfur (Fe-S) centers, to quinones in the respiratory and/or the photosynthetic chain. The immediate electron acceptor for the enzyme in this species is believed to be plastoquinone. Couples the redox reaction to proton translocation, and thus conserves the redox energy in a proton gradient. Cyanobacterial NDH-1 also plays a role in inorganic carbon-concentration. This Prochlorococcus marinus (strain MIT 9211) protein is NAD(P)H-quinone oxidoreductase subunit H.